The chain runs to 393 residues: Acetate kinase (393 aa).

Asparagine 7 contacts Mg(2+). Lysine 14 is an ATP binding site. Residue arginine 89 participates in substrate binding. The Proton donor/acceptor role is filled by aspartate 146. Residues 204–208, 279–281, and 327–331 contribute to the ATP site; these read HIGNG, DSR, and GIGEN. Mg(2+) is bound at residue glutamate 379.

This sequence belongs to the acetokinase family. As to quaternary structure, homodimer. Mg(2+) serves as cofactor. The cofactor is Mn(2+).

Its subcellular location is the cytoplasm. It carries out the reaction acetate + ATP = acetyl phosphate + ADP. The protein operates within metabolic intermediate biosynthesis; acetyl-CoA biosynthesis; acetyl-CoA from acetate: step 1/2. In terms of biological role, catalyzes the formation of acetyl phosphate from acetate and ATP. Can also catalyze the reverse reaction. In Acholeplasma laidlawii (strain PG-8A), this protein is Acetate kinase.